Here is a 409-residue protein sequence, read N- to C-terminus: MINALRGMKDLLDSDGKLYKFIVETCEQITKNYGYELCETPKMEETSLFKRSVGESSDIVGKEMYQFIDKGGNDVCLRPEGTAGVVRAFIEAKFDKAGGVKRYYYYGSMFRYERPQRGRLREFHQFGVECFGEASVYEDASVILMLNEILDKFGIETTLKINSLGDSECMPKYRQKLISFIDEKKDQLCEDCRRRLVTNPIRVLDCKKEHCQILLKNAPLITENLNEECYSEFEQLKDILTKNGVKFEVDGRLVRGLDYYCKTAFEFVSDEIGSKSAVAGGGRYDRLVDFLGGKSTPAVGWAMGIERIMEILKQKDMPNSRDGIYICALDKKYIDEIYKIGFKLRKNYKVEISYEAKSPNKHLNLADKKFAKLFLCMGEDEAKNGEIWYKNLENKNEKRIKILNLEGEL.

It belongs to the class-II aminoacyl-tRNA synthetase family. As to quaternary structure, homodimer.

The protein resides in the cytoplasm. It carries out the reaction tRNA(His) + L-histidine + ATP = L-histidyl-tRNA(His) + AMP + diphosphate + H(+). This is Histidine--tRNA ligase from Campylobacter fetus subsp. fetus (strain 82-40).